Reading from the N-terminus, the 366-residue chain is Ribosomal RNA large subunit methyltransferase M (366 aa).

S-adenosyl-L-methionine-binding positions include S188, 221–224, D240, D260, and D277; that span reads CPGG. The Proton acceptor role is filled by K306.

It belongs to the class I-like SAM-binding methyltransferase superfamily. RNA methyltransferase RlmE family. RlmM subfamily. Monomer.

The protein localises to the cytoplasm. The enzyme catalyses cytidine(2498) in 23S rRNA + S-adenosyl-L-methionine = 2'-O-methylcytidine(2498) in 23S rRNA + S-adenosyl-L-homocysteine + H(+). Functionally, catalyzes the 2'-O-methylation at nucleotide C2498 in 23S rRNA. This chain is Ribosomal RNA large subunit methyltransferase M, found in Escherichia coli O127:H6 (strain E2348/69 / EPEC).